A 134-amino-acid chain; its full sequence is Putative F-box protein R638 (134 aa).

An F-box domain is found at 5 to 52 (NIMNLLNEDCILHILSFLADKDKIQLSLSCKSNLKFLHKTIYDDIYFY).

In Acanthamoeba polyphaga mimivirus (APMV), this protein is Putative F-box protein R638.